Reading from the N-terminus, the 252-residue chain is MSRKPIIAGNWKMNKNPQEAKAFVEAVASKLPSTDLVDVAVAAPAVDLVTTIEAAKDSVLKVAAQNCYFENTGAFTGETSPKVLAEMGADYVVIGHSERRDYFHETDEDINKKAKAIFANGLTPIVCCGESLETYEAGKAVEFVGAQVSAALAGLSAEQVASLVLAYEPIWAIGTGKSATQDDAQNMCKAVRDVVAADFGQEVADKVRVQYGGSVKPENVKDYMACPDVDGALVGGASLEADSFLALLDFLN.

10–12 (NWK) contacts substrate. H96 (electrophile) is an active-site residue. E168 acts as the Proton acceptor in catalysis. Substrate is bound by residues G174, S214, and 235–236 (GG).

The protein belongs to the triosephosphate isomerase family. As to quaternary structure, homodimer.

The protein localises to the cytoplasm. The enzyme catalyses D-glyceraldehyde 3-phosphate = dihydroxyacetone phosphate. It participates in carbohydrate biosynthesis; gluconeogenesis. It functions in the pathway carbohydrate degradation; glycolysis; D-glyceraldehyde 3-phosphate from glycerone phosphate: step 1/1. Its function is as follows. Involved in the gluconeogenesis. Catalyzes stereospecifically the conversion of dihydroxyacetone phosphate (DHAP) to D-glyceraldehyde-3-phosphate (G3P). The protein is Triosephosphate isomerase of Streptococcus pyogenes serotype M1.